A 547-amino-acid polypeptide reads, in one-letter code: Chaperonin GroEL (547 aa).

Residues 30 to 33 (TLGP), K51, 87 to 91 (DGTTT), G415, 479 to 481 (NAA), and D495 contribute to the ATP site. The tract at residues 525-547 (PKEDSPGAGAGMGGMGGMGGMDM) is disordered. Positions 532 to 547 (AGAGMGGMGGMGGMDM) are enriched in gly residues.

It belongs to the chaperonin (HSP60) family. As to quaternary structure, forms a cylinder of 14 subunits composed of two heptameric rings stacked back-to-back. Interacts with the co-chaperonin GroES.

It is found in the cytoplasm. It catalyses the reaction ATP + H2O + a folded polypeptide = ADP + phosphate + an unfolded polypeptide.. In terms of biological role, together with its co-chaperonin GroES, plays an essential role in assisting protein folding. The GroEL-GroES system forms a nano-cage that allows encapsulation of the non-native substrate proteins and provides a physical environment optimized to promote and accelerate protein folding. In Nitrosomonas europaea (strain ATCC 19718 / CIP 103999 / KCTC 2705 / NBRC 14298), this protein is Chaperonin GroEL.